The following is a 165-amino-acid chain: Peptidyl-prolyl cis-trans isomerase A (165 aa).

The residue at position 1 (Met1) is an N-acetylmethionine. Val2 is subject to N-acetylvaline; in Peptidyl-prolyl cis-trans isomerase A, N-terminally processed. One can recognise a PPIase cyclophilin-type domain in the interval 7-163; it reads FFDIAVDGEP…KKITIADCGQ (157 aa). Lys28 carries the N6-acetyllysine; alternate modification. Lys28 participates in a covalent cross-link: Glycyl lysine isopeptide (Lys-Gly) (interchain with G-Cter in SUMO2); alternate. Lys28 participates in a covalent cross-link: Glycyl lysine isopeptide (Lys-Gly) (interchain with G-Cter in ubiquitin); alternate. 2 positions are modified to N6-acetyllysine: Lys44 and Lys76. Residue Ser77 is modified to Phosphoserine. Lys82 is subject to N6-acetyllysine; alternate. Lys82 is covalently cross-linked (Glycyl lysine isopeptide (Lys-Gly) (interchain with G-Cter in SUMO2); alternate). Thr93 carries the phosphothreonine modification. Asn108 carries N-linked (GlcNAc...) asparagine glycosylation. Lys125, Lys131, and Lys133 each carry N6-acetyllysine.

This sequence belongs to the cyclophilin-type PPIase family. PPIase A subfamily. As to quaternary structure, interacts with protein phosphatase PPP3CA/calcineurin A. Interacts with isoform 2 of BSG/CD147. Interacts with FOXO1; the interaction promotes FOXO1 dephosphorylation, nuclear accumulation and transcriptional activity. Interacts with integrin ITGA2B:ITGB3; the interaction is ROS and peptidyl-prolyl cis-trans isomerase (PPIase) activity-dependent and is increased in the presence of thrombin. Interacts with MAP3K5. Interacts with TARDBP; the interaction is dependent on the RNA-binding activity of TARDBP and the PPIase activity of PPIA/CYPA and the acetylation of PPIA/CYPA at Lys-125 favors the interaction. Interacts with HNRNPA1, HNRNPA2B1, HNRNPC, RBMX, HNRNPK and HNRNPM. Post-translationally, acetylation at Lys-125 markedly inhibits catalysis of cis to trans isomerization. PPIA acetylation also antagonizes the immunosuppressive effects of cyclosporine by inhibiting the sequential steps of cyclosporine binding and calcineurin inhibition. Acetylation at Lys-125 favors the interaction with TARDBP.

It localises to the cytoplasm. Its subcellular location is the secreted. It is found in the nucleus. It carries out the reaction [protein]-peptidylproline (omega=180) = [protein]-peptidylproline (omega=0). Binds cyclosporin A (CsA). CsA mediates some of its effects via an inhibitory action on PPIase. Catalyzes the cis-trans isomerization of proline imidic peptide bonds in oligopeptides. Exerts a strong chemotactic effect on leukocytes partly through activation of one of its membrane receptors BSG/CD147, initiating a signaling cascade that culminates in MAPK/ERK activation. Activates endothelial cells (ECs) in a proinflammatory manner by stimulating activation of NF-kappa-B and ERK, JNK and p38 MAP-kinases and by inducing expression of adhesion molecules including SELE and VCAM1. Induces apoptosis in ECs by promoting the FOXO1-dependent expression of CCL2 and BCL2L11 which are involved in EC chemotaxis and apoptosis. In response to oxidative stress, initiates proapoptotic and antiapoptotic signaling in ECs via activation of NF-kappa-B and AKT1 and up-regulation of antiapoptotic protein BCL2. Negatively regulates MAP3K5/ASK1 kinase activity, autophosphorylation and oxidative stress-induced apoptosis mediated by MAP3K5/ASK1. Necessary for the assembly of TARDBP in heterogeneous nuclear ribonucleoprotein (hnRNP) complexes and regulates TARDBP binding to RNA UG repeats and TARDBP-dependent expression of HDAC6, ATG7 and VCP which are involved in clearance of protein aggregates. Plays an important role in platelet activation and aggregation. Regulates calcium mobilization and integrin ITGA2B:ITGB3 bidirectional signaling via increased ROS production as well as by facilitating the interaction between integrin and the cell cytoskeleton. Binds heparan sulfate glycosaminoglycans. This chain is Peptidyl-prolyl cis-trans isomerase A (PPIA), found in Symphalangus syndactylus (Siamang).